We begin with the raw amino-acid sequence, 980 residues long: Valine--tRNA ligase (980 aa).

A 'HIGH' region motif is present at residues 43 to 53 (PNVTGTLHMGH). The 'KMSKS' region motif lies at 586–590 (KMSKS). K589 is a binding site for ATP. The stretch at 914 to 978 (LVDMDAERTR…QLTGLREQRA (65 aa)) forms a coiled coil.

Belongs to the class-I aminoacyl-tRNA synthetase family. ValS type 1 subfamily. As to quaternary structure, monomer.

Its subcellular location is the cytoplasm. The enzyme catalyses tRNA(Val) + L-valine + ATP = L-valyl-tRNA(Val) + AMP + diphosphate. Functionally, catalyzes the attachment of valine to tRNA(Val). As ValRS can inadvertently accommodate and process structurally similar amino acids such as threonine, to avoid such errors, it has a 'posttransfer' editing activity that hydrolyzes mischarged Thr-tRNA(Val) in a tRNA-dependent manner. The sequence is that of Valine--tRNA ligase from Xanthomonas euvesicatoria pv. vesicatoria (strain 85-10) (Xanthomonas campestris pv. vesicatoria).